Here is a 362-residue protein sequence, read N- to C-terminus: Vignain (362 aa).

The first 20 residues, 1–20 (MATKKLLWVVLSFSLVLGVA), serve as a signal peptide directing secretion. The propeptide at 21 to 131 (NSFDFHDKDL…YEKVVSVPPS (111 aa)) is activation peptide. 3 disulfides stabilise this stretch: Cys149–Cys191, Cys183–Cys224, and Cys282–Cys334. Residue Cys152 is part of the active site. Residues His288 and Asn309 contribute to the active site. Residues Asn326 and Asn346 are each glycosylated (N-linked (GlcNAc...) asparagine). The Prevents secretion from ER motif lies at 359–362 (KDEL).

Belongs to the peptidase C1 family. In terms of assembly, monomer.

The protein localises to the endoplasmic reticulum lumen. Thought to be involved in the hydrolysis of stored seed proteins. The sequence is that of Vignain from Phaseolus vulgaris (Kidney bean).